Consider the following 446-residue polypeptide: Histidine--tRNA ligase (446 aa).

The protein belongs to the class-II aminoacyl-tRNA synthetase family. As to quaternary structure, homodimer.

It is found in the cytoplasm. The enzyme catalyses tRNA(His) + L-histidine + ATP = L-histidyl-tRNA(His) + AMP + diphosphate + H(+). In Burkholderia ambifaria (strain MC40-6), this protein is Histidine--tRNA ligase.